The following is a 426-amino-acid chain: Cytochrome b-c1 complex subunit 2, mitochondrial (426 aa).

A mitochondrion-targeting transit peptide spans M1–G30.

This sequence belongs to the peptidase M16 family. UQCRC2/QCR2 subfamily. In terms of assembly, component of the ubiquinol-cytochrome c oxidoreductase (cytochrome b-c1 complex, complex III, CIII), a multisubunit enzyme composed of 3 respiratory subunits cytochrome b, cytochrome c1 and Rieske protein, 2 core protein subunits, and additional low-molecular weight protein subunits. The complex exists as an obligatory dimer and forms supercomplexes (SCs) in the inner mitochondrial membrane with cytochrome c oxidase (complex IV, CIV).

It localises to the mitochondrion inner membrane. Component of the ubiquinol-cytochrome c oxidoreductase, a multisubunit transmembrane complex that is part of the mitochondrial electron transport chain which drives oxidative phosphorylation. The respiratory chain contains 3 multisubunit complexes succinate dehydrogenase (complex II, CII), ubiquinol-cytochrome c oxidoreductase (cytochrome b-c1 complex, complex III, CIII) and cytochrome c oxidase (complex IV, CIV), that cooperate to transfer electrons derived from NADH and succinate to molecular oxygen, creating an electrochemical gradient over the inner membrane that drives transmembrane transport and the ATP synthase. The cytochrome b-c1 complex catalyzes electron transfer from ubiquinol to cytochrome c, linking this redox reaction to translocation of protons across the mitochondrial inner membrane, with protons being carried across the membrane as hydrogens on the quinol. In the process called Q cycle, 2 protons are consumed from the matrix, 4 protons are released into the intermembrane space and 2 electrons are passed to cytochrome c. The polypeptide is Cytochrome b-c1 complex subunit 2, mitochondrial (qcr2) (Schizosaccharomyces pombe (strain 972 / ATCC 24843) (Fission yeast)).